A 501-amino-acid polypeptide reads, in one-letter code: Dipeptide and tripeptide permease B (501 aa).

Residues methionine 1–arginine 27 lie on the Cytoplasmic side of the membrane. The helical transmembrane segment at phenylalanine 28–serine 48 threads the bilayer. The Periplasmic segment spans residues glutamine 49–serine 52. A helical membrane pass occupies residues phenylalanine 53 to valine 73. Residues glycine 74 to arginine 82 are Cytoplasmic-facing. A helical membrane pass occupies residues threonine 83–tyrosine 103. Residues asparagine 104 to aspartate 106 lie on the Periplasmic side of the membrane. A helical membrane pass occupies residues leucine 107–alanine 127. The Cytoplasmic portion of the chain corresponds to serine 128–threonine 146. Residues leucine 147 to alanine 167 traverse the membrane as a helical segment. Residues aspartate 168 to tyrosine 172 are Periplasmic-facing. A helical membrane pass occupies residues threonine 173–cysteine 193. Residues arginine 194–tyrosine 211 are Cytoplasmic-facing. The helical transmembrane segment at glycine 212 to methionine 232 threads the bilayer. Position 233 (histidine 233) is a topological domain, periplasmic. The chain crosses the membrane as a helical span at residues histidine 234–phenylalanine 254. The Cytoplasmic portion of the chain corresponds to arginine 255–lysine 267. Residues methionine 268–methionine 288 form a helical membrane-spanning segment. Residues proline 289–proline 311 lie on the Periplasmic side of the membrane. The chain crosses the membrane as a helical span at residues isoleucine 312–isoleucine 332. Topologically, residues tyrosine 333–threonine 350 are cytoplasmic. A helical transmembrane segment spans residues leucine 351 to alanine 371. Topologically, residues aspartate 372–tryptophan 380 are periplasmic. Residues phenylalanine 381–leucine 401 form a helical membrane-spanning segment. Over alanine 402–arginine 411 the chain is Cytoplasmic. The chain crosses the membrane as a helical span at residues leucine 412–glycine 432. At tyrosine 433–aspartate 456 the chain is on the periplasmic side. Residues valine 457–proline 477 traverse the membrane as a helical segment. At tryptophan 478–alanine 501 the chain is on the cytoplasmic side.

It belongs to the major facilitator superfamily. Proton-dependent oligopeptide transporter (POT/PTR) (TC 2.A.17) family. DtpB subfamily.

It localises to the cell inner membrane. Functionally, proton-dependent permease that transports di- and tripeptides. In Aeromonas hydrophila subsp. hydrophila (strain ATCC 7966 / DSM 30187 / BCRC 13018 / CCUG 14551 / JCM 1027 / KCTC 2358 / NCIMB 9240 / NCTC 8049), this protein is Dipeptide and tripeptide permease B.